We begin with the raw amino-acid sequence, 81 residues long: MKTLLLTLVVVTIVCLDLGYTMTCCNQQSSQPKTTKTCAESSCYKKTWRDHRGTITERGCGCPSVKPGIQLECCKTNECNN.

The signal sequence occupies residues 1–21; the sequence is MKTLLLTLVVVTIVCLDLGYT. 4 cysteine pairs are disulfide-bonded: cysteine 24–cysteine 43, cysteine 38–cysteine 60, cysteine 62–cysteine 73, and cysteine 74–cysteine 79.

The protein belongs to the three-finger toxin family. Short-chain subfamily. Type I alpha-neurotoxin sub-subfamily. Expressed by the venom gland.

It localises to the secreted. In terms of biological role, binds to muscle nicotinic acetylcholine receptor (nAChR) and inhibit acetylcholine from binding to the receptor, thereby impairing neuromuscular transmission. In Hoplocephalus stephensii (Stephens's banded snake), this protein is Short neurotoxin 1.